A 185-amino-acid chain; its full sequence is Crossover junction endodeoxyribonuclease RuvC (185 aa).

Active-site residues include aspartate 16, glutamate 75, and aspartate 147. 3 residues coordinate Mg(2+): aspartate 16, glutamate 75, and aspartate 147.

Belongs to the RuvC family. Homodimer which binds Holliday junction (HJ) DNA. The HJ becomes 2-fold symmetrical on binding to RuvC with unstacked arms; it has a different conformation from HJ DNA in complex with RuvA. In the full resolvosome a probable DNA-RuvA(4)-RuvB(12)-RuvC(2) complex forms which resolves the HJ. It depends on Mg(2+) as a cofactor.

Its subcellular location is the cytoplasm. It catalyses the reaction Endonucleolytic cleavage at a junction such as a reciprocal single-stranded crossover between two homologous DNA duplexes (Holliday junction).. Functionally, the RuvA-RuvB-RuvC complex processes Holliday junction (HJ) DNA during genetic recombination and DNA repair. Endonuclease that resolves HJ intermediates. Cleaves cruciform DNA by making single-stranded nicks across the HJ at symmetrical positions within the homologous arms, yielding a 5'-phosphate and a 3'-hydroxyl group; requires a central core of homology in the junction. The consensus cleavage sequence is 5'-(A/T)TT(C/G)-3'. Cleavage occurs on the 3'-side of the TT dinucleotide at the point of strand exchange. HJ branch migration catalyzed by RuvA-RuvB allows RuvC to scan DNA until it finds its consensus sequence, where it cleaves and resolves the cruciform DNA. This is Crossover junction endodeoxyribonuclease RuvC from Aromatoleum aromaticum (strain DSM 19018 / LMG 30748 / EbN1) (Azoarcus sp. (strain EbN1)).